The primary structure comprises 498 residues: Flavin-dependent halogenase otaD (498 aa).

Residues glycine 14, glycine 17, and glutamate 47 each coordinate FAD. Positions 326 and 327 each coordinate chloride. Residue valine 328 coordinates FAD.

This sequence belongs to the flavin-dependent halogenase family.

The catalysed reaction is ochratoxin B + FADH2 + chloride + O2 = ochratoxin A + FAD + 2 H2O. It participates in mycotoxin biosynthesis. Its function is as follows. Flavin-dependent halogenase; part of the gene cluster that mediates the biosynthesis of ochratoxin A (OTA), a mycotoxin composed of a chlorinated type I polyketide dihydroisocoumarin moiety linked to L-phenylalanine, and demonstrated to have nephrotoxic, immunotoxic, genotoxic, neurotoxic, and teratogenic properties. OtaD chlorinates ochratoxin B (OTB) at the C-5 position to form OTA. The pathway begins with the highly reducing polyketide synthase otaA that catalyzes the formation of the isocoumarin group during the initial stages of biosynthesis, starting from one acetate and 4 malonate units, to originate the characteristic pentaketide skeleton 7-methylmellein (7-MM) of the OTA molecule. The newly identified cyclase otaY might be involved in the polyketide cyclization reaction during the initial steps of the OTA biosynthesis. 7-MM is then oxidized into 7-carboxymellein (also called ochratoxin beta) by the cytochrome P450 monooxygenase otaC. The NRPS encoded by the otaB gene is involved in the linking of phenylalanine to the dihydroisocoumarin ring. The reaction catalyzed by NRPS results in the production of ochratoxin B (OTB), which is the non-chlorinated analog of OTA and which subsequently serves as the substrate of the halogenase otaD for chlorination activity to form the final molecular structure of OTA, containing a chlorine atom in the C-5 position of the molecule. The sequence is that of Flavin-dependent halogenase otaD from Aspergillus carbonarius (strain ITEM 5010).